Here is a 443-residue protein sequence, read N- to C-terminus: Glucose-6-phosphate isomerase (443 aa).

The active-site Proton donor is the Glu285. Catalysis depends on residues His306 and Lys420.

Belongs to the GPI family.

It localises to the cytoplasm. It carries out the reaction alpha-D-glucose 6-phosphate = beta-D-fructose 6-phosphate. The protein operates within carbohydrate biosynthesis; gluconeogenesis. It participates in carbohydrate degradation; glycolysis; D-glyceraldehyde 3-phosphate and glycerone phosphate from D-glucose: step 2/4. Functionally, catalyzes the reversible isomerization of glucose-6-phosphate to fructose-6-phosphate. The polypeptide is Glucose-6-phosphate isomerase (Staphylococcus saprophyticus subsp. saprophyticus (strain ATCC 15305 / DSM 20229 / NCIMB 8711 / NCTC 7292 / S-41)).